The sequence spans 239 residues: Purine nucleoside phosphorylase DeoD-type 1 (239 aa).

Residue His-5 participates in a purine D-ribonucleoside binding. Phosphate contacts are provided by residues Gly-21, Arg-25, Arg-44, and 88-91 (RVGS). Residues 180 to 182 (EME) and 204 to 205 (SD) contribute to the a purine D-ribonucleoside site. Asp-205 serves as the catalytic Proton donor.

It belongs to the PNP/UDP phosphorylase family. In terms of assembly, homohexamer; trimer of homodimers.

The enzyme catalyses a purine D-ribonucleoside + phosphate = a purine nucleobase + alpha-D-ribose 1-phosphate. It carries out the reaction a purine 2'-deoxy-D-ribonucleoside + phosphate = a purine nucleobase + 2-deoxy-alpha-D-ribose 1-phosphate. In terms of biological role, catalyzes the reversible phosphorolytic breakdown of the N-glycosidic bond in the beta-(deoxy)ribonucleoside molecules, with the formation of the corresponding free purine bases and pentose-1-phosphate. The protein is Purine nucleoside phosphorylase DeoD-type 1 of Vibrio parahaemolyticus serotype O3:K6 (strain RIMD 2210633).